Consider the following 179-residue polypeptide: Ubiquitin-conjugating enzyme E2 C (179 aa).

The segment covering 1 to 14 (MASQNRDPAATSVT) has biased composition (polar residues). Residues 1 to 31 (MASQNRDPAATSVTAARKGAEPSGGAARGPV) form a disordered region. Residue Ala-2 is modified to N-acetylalanine. Ser-3 is modified (phosphoserine). A UBC core domain is found at 30 to 175 (PVGKRLQQEL…LQETYSKQVT (146 aa)). The active-site Glycyl thioester intermediate is Cys-114.

This sequence belongs to the ubiquitin-conjugating enzyme family. As to quaternary structure, component of the APC/C complex, composed of at least 14 distinct subunits that assemble into a complex of at least 19 chains with a combined molecular mass of around 1.2 MDa. Within this complex, directly interacts with ANAPC2. In terms of processing, autoubiquitinated by the APC/C complex, leading to its degradation by the proteasome. Its degradation plays a central role in APC/C regulation, allowing cyclin-A accumulation before S phase entry. APC/C substrates inhibit the autoubiquitination of UBE2C/UBCH10 but not its E2 function, hence APC/C remaining active until its substrates have been destroyed.

It catalyses the reaction S-ubiquitinyl-[E1 ubiquitin-activating enzyme]-L-cysteine + [E2 ubiquitin-conjugating enzyme]-L-cysteine = [E1 ubiquitin-activating enzyme]-L-cysteine + S-ubiquitinyl-[E2 ubiquitin-conjugating enzyme]-L-cysteine.. The enzyme catalyses S-ubiquitinyl-[E1 ubiquitin-activating enzyme]-L-cysteine + [acceptor protein]-L-lysine = [E1 ubiquitin-activating enzyme]-L-cysteine + N(6)-monoubiquitinyl-[acceptor protein]-L-lysine.. It participates in protein modification; protein ubiquitination. Functionally, accepts ubiquitin from the E1 complex and catalyzes its covalent attachment to other proteins. In vitro catalyzes 'Lys-11'- and 'Lys-48'-linked polyubiquitination. Acts as an essential factor of the anaphase promoting complex/cyclosome (APC/C), a cell cycle-regulated ubiquitin ligase that controls progression through mitosis. Acts by initiating 'Lys-11'-linked polyubiquitin chains on APC/C substrates, leading to the degradation of APC/C substrates by the proteasome and promoting mitotic exit. This chain is Ubiquitin-conjugating enzyme E2 C (UBE2C), found in Macaca fascicularis (Crab-eating macaque).